A 691-amino-acid polypeptide reads, in one-letter code: Protein 4.2 (691 aa).

Glycine 2 is lipidated: N-myristoyl glycine. The band 3 binding stretch occupies residues 31–39; it reads LTLRRGQSF. At serine 248 the chain carries Phosphoserine. A Phosphotyrosine modification is found at tyrosine 570.

It belongs to the transglutaminase superfamily. Transglutaminase family. In terms of assembly, component of the ankyrin-1 complex in the erythrocyte, composed of ANK1, RHCE, RHAG, SLC4A1, EPB42, GYPA, GYPB and AQP1. Interacts with SLC4A1 (via the cytoplasmic domain); this interaction is mediated by the SLC4A1 Band 3-I dimer. Interacts with ANK1 (via ANK 1-13 repeats). Interacts with AQP1 (via the C-terminal).

The protein resides in the cell membrane. It is found in the cytoplasm. It localises to the cytoskeleton. Functionally, component of the ankyrin-1 complex, a multiprotein complex involved in the stability and shape of the erythrocyte membrane. This chain is Protein 4.2, found in Mus musculus (Mouse).